Consider the following 680-residue polypeptide: MTAEPNKPCQIKRDYPQLINLYPATAHNDAHYLSKLSIYQQRVFEAHSQQKLLVLGQMGLGNGLELLSWWRTQTNPNQRLLLKVFEPHPINAYELKLLWDQSASLAKVPELELLAQRLLHTEPTAIIGCQRLIFDDGRTTIDLHFGDIQSQLSSLIHSPLHPVQHWLVLPHLQNGLHQQIHWQMAKLSDDSATVATIGLNESSGLSETTVNRFQACGFEVRDFTCAEIQTNPQPDAILLHERHVLRRQDAKAYAFNPMAAILSSDAPSSIAIIGGGLASAHLALSLAERGQSTQIFCKDAKLGQGASGNRQGAIYPLLTPENDELSRFFQQAFLFSRRRVQALTSAPAPNQTPISHNFCGVLQTAHDERSQLRLDKIIQSQNWPSEIAYRVDAQQANCLANINIDKSGFFYPLAGWVCPYEYAEAALQKAQQLTEVKLHLETEILEIEHQSEGWYLITAKHRFGPFAQVVLANGAALTQFDASNKLQISPFRGQVSHVPAQFQLSQLATVLCANGYLTPSHEGLHCLGASYVKEPKHLDFCPQEQQENLAKMHESYPDQGWLDDIDMSGNNARVGVRMVTRDHFPMMGCAPDVPKIIKDYAQHQLTKESRHYWQTTPAPVHEGLYILGGLGSRGLSSGPLAAECLAAQLCSEPIPLDKATLCKLNPNRMWLRKLLKGKSL.

A tRNA (mnm(5)s(2)U34)-methyltransferase region spans residues 1-267 (MTAEPNKPCQ…MAAILSSDAP (267 aa)). Positions 273 to 680 (IGGGLASAHL…LRKLLKGKSL (408 aa)) are FAD-dependent cmnm(5)s(2)U34 oxidoreductase.

The protein in the N-terminal section; belongs to the methyltransferase superfamily. tRNA (mnm(5)s(2)U34)-methyltransferase family. It in the C-terminal section; belongs to the DAO family. FAD is required as a cofactor.

The protein localises to the cytoplasm. It catalyses the reaction 5-aminomethyl-2-thiouridine(34) in tRNA + S-adenosyl-L-methionine = 5-methylaminomethyl-2-thiouridine(34) in tRNA + S-adenosyl-L-homocysteine + H(+). Catalyzes the last two steps in the biosynthesis of 5-methylaminomethyl-2-thiouridine (mnm(5)s(2)U) at the wobble position (U34) in tRNA. Catalyzes the FAD-dependent demodification of cmnm(5)s(2)U34 to nm(5)s(2)U34, followed by the transfer of a methyl group from S-adenosyl-L-methionine to nm(5)s(2)U34, to form mnm(5)s(2)U34. The chain is tRNA 5-methylaminomethyl-2-thiouridine biosynthesis bifunctional protein MnmC from Shewanella sp. (strain W3-18-1).